The following is a 438-amino-acid chain: Cytochrome P450 monooxygenase claJ (438 aa).

C378 serves as a coordination point for heme.

Belongs to the cytochrome P450 family. Heme serves as cofactor.

It functions in the pathway secondary metabolite biosynthesis. Its function is as follows. Cytochrome P450 monooxygenase; part of the cla gene cluster that produces clavatol and ortho-quinone methide. The clavatol biosynthesis cluster cla and the terrestric acid cluster tra are both involved in the production of peniphenones and penilactones. The non-reducing PKS claF is responsible for the formation of clavatol from successive condensations of 3 malonyl-CoA units, presumably with a simple acetyl-CoA starter unit, and 2 methylation steps. The esterase claE probably collaborates with claF by catalyzing the hydrolysis of ACP-bound acyl intermediates to free the ACP from stalled intermediates. The clavatol oxidase claD then converts clavatol to hydroxyclavatol. Spontaneous dehydration of hydroxyclavatol leads to the accumulation of the highly active ortho-quinone methide. On the other hand, the PKS-NRPS hybrid traA is involved in the formation of crustosic acid, with the help of traB and traD. The polyketide synthase module (PKS) of traA is responsible for the synthesis of the polyketide backbone via the condensation of an acetyl-CoA starter unit with 3 malonyl-CoA units. The downstream nonribosomal peptide synthetase (NRPS) module then amidates the carboxyl end of the polyketide with L-malic acid. Because traA lacks a designated enoylreductase (ER) domain, the required activity is provided the enoyl reductase traG. Crustosic acid undergoes decarboxylation and isomerization to the terrestric acid, catalyzed by the 2-oxoglutarate-dependent dioxygenase traH. Both acids are further converted to the 2 gamma-butyrolactones (R)-5-methyltetronic acid and (S)-5-carboxylmethyltetronic acid, with involvement of the cytochrome P450 monooxygenase claJ. Spontaneous addition of the methide to these gamma-butyrolactones leads to peniphenone D and penilactone D, which undergo again stereospecific attacking by methide to give penilactones A and B. This Penicillium crustosum (Blue mold fungus) protein is Cytochrome P450 monooxygenase claJ.